The sequence spans 72 residues: General transcription factor IIH subunit 5 (72 aa).

Belongs to the TFB5 family. In terms of assembly, component of the 7-subunit TFIIH core complex composed of XPB/repB, XPD/repD, gtf2h1, gtf2h2, gtf2h3, gtf2h4 and gtf2h5, which is active in NER. The core complex associates with the 3-subunit CDK-activating kinase (CAK) module composed of cycH/cyclin H, cdk7 and mnat1 to form the 10-subunit holoenzyme (holo-TFIIH) active in transcription.

It localises to the nucleus. In terms of biological role, component of the general transcription and DNA repair factor IIH (TFIIH) core complex, which is involved in general and transcription-coupled nucleotide excision repair (NER) of damaged DNA and, when complexed to CAK, in RNA transcription by RNA polymerase II. In NER, TFIIH acts by opening DNA around the lesion to allow the excision of the damaged oligonucleotide and its replacement by a new DNA fragment. In transcription, TFIIH has an essential role in transcription initiation. When the pre-initiation complex (PIC) has been established, TFIIH is required for promoter opening and promoter escape. Phosphorylation of the C-terminal tail (CTD) of the largest subunit of RNA polymerase II by the kinase module CAK controls the initiation of transcription. The chain is General transcription factor IIH subunit 5 (gtf2h5) from Dictyostelium discoideum (Social amoeba).